The chain runs to 120 residues: UPF0231 protein YE0706 (120 aa).

This sequence belongs to the UPF0231 family.

The protein is UPF0231 protein YE0706 of Yersinia enterocolitica serotype O:8 / biotype 1B (strain NCTC 13174 / 8081).